Here is a 281-residue protein sequence, read N- to C-terminus: MAWFRRKQKGILTPTEHKKEIPDGLWYKSPKGKIIQIKELKENVYVSPEDGYHVRIGSKEYFELLFDNNQFTEIAANLTSADPLEFIDNKPYTQRLQQAQQDTQLKDSIQVGYGPVNGNSMVIACMDFNFIGGSMGSVVGEKIAKAVDHALEHKAPLLIISKSGGARMMEAGLSLMQMAKTSAKLLQLAKARIPYISLLTDPTTGGVTASFAMLGDFNIAEPGALIGFAGPRIIRDTIGRDLPKGFQTSEFLLEHGFLDFIVDRRMLKATLTKLLTMLANN.

The CoA carboxyltransferase N-terminal domain maps to 24–281 (GLWYKSPKGK…TKLLTMLANN (258 aa)).

The protein belongs to the AccD/PCCB family. In terms of assembly, acetyl-CoA carboxylase is a heterohexamer composed of biotin carboxyl carrier protein (AccB), biotin carboxylase (AccC) and two subunits each of ACCase subunit alpha (AccA) and ACCase subunit beta (AccD).

It localises to the cytoplasm. The catalysed reaction is N(6)-carboxybiotinyl-L-lysyl-[protein] + acetyl-CoA = N(6)-biotinyl-L-lysyl-[protein] + malonyl-CoA. It functions in the pathway lipid metabolism; malonyl-CoA biosynthesis; malonyl-CoA from acetyl-CoA: step 1/1. Component of the acetyl coenzyme A carboxylase (ACC) complex. Biotin carboxylase (BC) catalyzes the carboxylation of biotin on its carrier protein (BCCP) and then the CO(2) group is transferred by the transcarboxylase to acetyl-CoA to form malonyl-CoA. The sequence is that of Acetyl-coenzyme A carboxylase carboxyl transferase subunit beta from Amoebophilus asiaticus (strain 5a2).